We begin with the raw amino-acid sequence, 439 residues long: Magnesium-dependent glutamate N-prenyltransferase (439 aa).

The Mg(2+) site is built by Asn-322, Thr-326, Glu-330, and Phe-337.

The protein belongs to the terpene synthase family. Requires Mg(2+) as cofactor.

The catalysed reaction is dimethylallyl diphosphate + L-glutamate = prekainate + diphosphate. It functions in the pathway secondary metabolite biosynthesis. Magnesium-dependent glutamate N-prenyltransferase: part of the gene cluster that mediates the biosynthesis of kainic acid (KA) and derivatives, natural products with neurochemical activity acting as ionotropic glutamate receptor (iGluR) agonists, thus being neurotoxins. Catalyzes the conversion of L-glutamic acid (L-Glu) to prekainic acid in the presence of dimethylallyl diphosphate (DMAPP). Can also use geranyl diphosphate (GPP) as substrate, thus leading to the formation of N-geranyl-L-glutamic acid (L-NGG). This Digenea simplex (Marine red alga) protein is Magnesium-dependent glutamate N-prenyltransferase.